The chain runs to 326 residues: Isoaspartyl peptidase/L-asparaginase (326 aa).

Threonine 185 functions as the Nucleophile in the catalytic mechanism. Residues 213 to 216 and 236 to 239 each bind substrate; these read RVGD and TGHG.

It belongs to the Ntn-hydrolase family. In terms of assembly, heterodimer of an alpha and beta chain produced by autocleavage. This heterodimer may then dimerize in turn, giving rise to a heterotetramer. In terms of processing, cleaved into an alpha and beta chain by autocatalysis; this activates the enzyme. The N-terminal residue of the beta subunit is responsible for the nucleophile hydrolase activity. High expression in the heart and brain while low to minimal expression in the other tissues. In ocular tissues, high levels is observed in the optic nerve and retina while relatively low levels of expression are detected in the iris-ciliary body, lens or retinal pigment epithelium.

It is found in the cytoplasm. It carries out the reaction L-asparagine + H2O = L-aspartate + NH4(+). The enzyme catalyses Cleavage of a beta-linked Asp residue from the N-terminus of a polypeptide.. Has both L-asparaginase and beta-aspartyl peptidase activity. May be involved in the production of L-aspartate, which can act as an excitatory neurotransmitter in some brain regions. Is highly active with L-Asp beta-methyl ester. Besides, has catalytic activity toward beta-aspartyl dipeptides and their methyl esters, including beta-L-Asp-L-Phe, beta-L-Asp-L-Phe methyl ester (aspartame), beta-L-Asp-L-Ala, beta-L-Asp-L-Leu and beta-L-Asp-L-Lys. Does not have aspartylglucosaminidase activity and is inactive toward GlcNAc-L-Asn. Likewise, has no activity toward glutamine. The sequence is that of Isoaspartyl peptidase/L-asparaginase (Asrgl1) from Mus musculus (Mouse).